Reading from the N-terminus, the 202-residue chain is Small ribosomal subunit protein uS4c (202 aa).

The S4 RNA-binding domain maps to 90-153 (MRLDNIIFRL…KSEAIISKNI (64 aa)).

It belongs to the universal ribosomal protein uS4 family. In terms of assembly, part of the 30S ribosomal subunit. Contacts protein S5. The interaction surface between S4 and S5 is involved in control of translational fidelity.

It localises to the plastid. Its subcellular location is the chloroplast. In terms of biological role, one of the primary rRNA binding proteins, it binds directly to 16S rRNA where it nucleates assembly of the body of the 30S subunit. Its function is as follows. With S5 and S12 plays an important role in translational accuracy. This Leucodon sciuroides (Moss) protein is Small ribosomal subunit protein uS4c (rps4).